Here is a 159-residue protein sequence, read N- to C-terminus: Ribosomal RNA large subunit methyltransferase H (159 aa).

Residues Leu-76, Gly-108, and 127 to 132 each bind S-adenosyl-L-methionine; that span reads FSKMTF.

Belongs to the RNA methyltransferase RlmH family. Homodimer.

It is found in the cytoplasm. The enzyme catalyses pseudouridine(1915) in 23S rRNA + S-adenosyl-L-methionine = N(3)-methylpseudouridine(1915) in 23S rRNA + S-adenosyl-L-homocysteine + H(+). Functionally, specifically methylates the pseudouridine at position 1915 (m3Psi1915) in 23S rRNA. The polypeptide is Ribosomal RNA large subunit methyltransferase H (Exiguobacterium sp. (strain ATCC BAA-1283 / AT1b)).